Here is a 150-residue protein sequence, read N- to C-terminus: MLKEFREFVLRGNVADMAVGIIIGGAFGAIVNTLVSDVLMPPLGLLIGGIDFSNFYLVLKEGSAPGPYAALADAKAVGAVTVNYGIFLNALISFMIMAFAVFMLIKSLTSMRGKPEPPAPAPAVKECPYCCSTIPLKASRCPECTSQLEK.

2 helical membrane-spanning segments follow: residues 19–39 and 85–105; these read VGII…SDVL and GIFL…FMLI.

It belongs to the MscL family. In terms of assembly, homopentamer.

It is found in the cell inner membrane. Channel that opens in response to stretch forces in the membrane lipid bilayer. May participate in the regulation of osmotic pressure changes within the cell. The polypeptide is Large-conductance mechanosensitive channel (Chlorobium limicola (strain DSM 245 / NBRC 103803 / 6330)).